A 192-amino-acid polypeptide reads, in one-letter code: Ubiquitin-conjugating enzyme E2 T (192 aa).

Residues 2–152 enclose the UBC core domain; the sequence is QRVSRLKREL…AKKWTEKHAL (151 aa). Catalysis depends on cysteine 86, which acts as the Glycyl thioester intermediate. Residues 150-192 are disordered; the sequence is HALPAPQGSDKESQEKSGSSEGTSHKRKSAEIAEESKKPCREP. Residues 178–192 show a composition bias toward basic and acidic residues; the sequence is SAEIAEESKKPCREP.

Belongs to the ubiquitin-conjugating enzyme family.

It localises to the nucleus. It carries out the reaction S-ubiquitinyl-[E1 ubiquitin-activating enzyme]-L-cysteine + [E2 ubiquitin-conjugating enzyme]-L-cysteine = [E1 ubiquitin-activating enzyme]-L-cysteine + S-ubiquitinyl-[E2 ubiquitin-conjugating enzyme]-L-cysteine.. The protein operates within protein modification; protein ubiquitination. Functionally, accepts ubiquitin from the E1 complex and catalyzes its covalent attachment to other proteins. Catalyzes monoubiquitination. Involved in DNA repair. This chain is Ubiquitin-conjugating enzyme E2 T (ube2t), found in Xenopus laevis (African clawed frog).